Consider the following 200-residue polypeptide: uncharacterized protein (200 aa).

The signal sequence occupies residues 1-19; it reads MNAMFHSLFALSFVSLVAS. The chain crosses the membrane as a helical span at residues 148 to 168; that stretch reads FMVIVSLAAFCISVLAGLALQ.

It is found in the membrane. This is an uncharacterized protein from Caenorhabditis elegans.